The primary structure comprises 342 residues: S-adenosylmethionine:tRNA ribosyltransferase-isomerase (342 aa).

It belongs to the QueA family. Monomer.

It localises to the cytoplasm. The enzyme catalyses 7-aminomethyl-7-carbaguanosine(34) in tRNA + S-adenosyl-L-methionine = epoxyqueuosine(34) in tRNA + adenine + L-methionine + 2 H(+). Its pathway is tRNA modification; tRNA-queuosine biosynthesis. Transfers and isomerizes the ribose moiety from AdoMet to the 7-aminomethyl group of 7-deazaguanine (preQ1-tRNA) to give epoxyqueuosine (oQ-tRNA). The protein is S-adenosylmethionine:tRNA ribosyltransferase-isomerase of Listeria innocua serovar 6a (strain ATCC BAA-680 / CLIP 11262).